The primary structure comprises 126 residues: Large ribosomal subunit protein bL20c (126 aa).

This sequence belongs to the bacterial ribosomal protein bL20 family.

The protein resides in the plastid. It is found in the chloroplast. Its function is as follows. Binds directly to 23S ribosomal RNA and is necessary for the in vitro assembly process of the 50S ribosomal subunit. It is not involved in the protein synthesizing functions of that subunit. This Lactuca sativa (Garden lettuce) protein is Large ribosomal subunit protein bL20c.